The following is a 371-amino-acid chain: Probable trehalose-phosphate phosphatase 1 (371 aa).

Belongs to the trehalose phosphatase family. A divalent metal cation serves as cofactor. In terms of tissue distribution, expressed in roots and shoots.

It carries out the reaction alpha,alpha-trehalose 6-phosphate + H2O = alpha,alpha-trehalose + phosphate. Its pathway is glycan biosynthesis; trehalose biosynthesis. Its function is as follows. Removes the phosphate from trehalose 6-phosphate to produce free trehalose. Trehalose accumulation in plant improves abiotic stress tolerance. The protein is Probable trehalose-phosphate phosphatase 1 (TPP1) of Oryza sativa subsp. japonica (Rice).